Consider the following 88-residue polypeptide: Small ribosomal subunit protein uS15c (88 aa).

This sequence belongs to the universal ribosomal protein uS15 family. In terms of assembly, part of the 30S ribosomal subunit.

The protein localises to the plastid. The protein resides in the chloroplast. In Arabis hirsuta (Hairy rock-cress), this protein is Small ribosomal subunit protein uS15c (rps15).